The primary structure comprises 276 residues: Formamidopyrimidine-DNA glycosylase (276 aa).

Catalysis depends on Pro2, which acts as the Schiff-base intermediate with DNA. Glu3 acts as the Proton donor in catalysis. The Proton donor; for beta-elimination activity role is filled by Lys58. Residues His92, Arg111, and Lys154 each coordinate DNA. Residues Gln239–Val273 form an FPG-type zinc finger. The Proton donor; for delta-elimination activity role is filled by Arg263.

Belongs to the FPG family. Monomer. It depends on Zn(2+) as a cofactor.

The catalysed reaction is Hydrolysis of DNA containing ring-opened 7-methylguanine residues, releasing 2,6-diamino-4-hydroxy-5-(N-methyl)formamidopyrimidine.. It carries out the reaction 2'-deoxyribonucleotide-(2'-deoxyribose 5'-phosphate)-2'-deoxyribonucleotide-DNA = a 3'-end 2'-deoxyribonucleotide-(2,3-dehydro-2,3-deoxyribose 5'-phosphate)-DNA + a 5'-end 5'-phospho-2'-deoxyribonucleoside-DNA + H(+). Functionally, involved in base excision repair of DNA damaged by oxidation or by mutagenic agents. Acts as a DNA glycosylase that recognizes and removes damaged bases. Has a preference for oxidized purines, such as 7,8-dihydro-8-oxoguanine (8-oxoG). Has AP (apurinic/apyrimidinic) lyase activity and introduces nicks in the DNA strand. Cleaves the DNA backbone by beta-delta elimination to generate a single-strand break at the site of the removed base with both 3'- and 5'-phosphates. The protein is Formamidopyrimidine-DNA glycosylase of Lactobacillus acidophilus (strain ATCC 700396 / NCK56 / N2 / NCFM).